Consider the following 132-residue polypeptide: Transthyretin-like protein 16 (132 aa).

Residues 1-19 form the signal peptide; the sequence is MRSLVVCLLLAACALECTA. A glycan (N-linked (GlcNAc...) asparagine) is linked at asparagine 23.

The protein belongs to the nematode transthyretin-like family.

It is found in the secreted. This is Transthyretin-like protein 16 (ttr-16) from Caenorhabditis elegans.